The following is a 1553-amino-acid chain: Dual oxidase 1 (1553 aa).

The signal sequence occupies residues methionine 1–alanine 21. Residues arginine 22 to glycine 596 are Extracellular-facing. Positions serine 26–phenylalanine 593 are peroxidase-like; mediates peroxidase activity. N-linked (GlcNAc...) asparagine glycosylation is found at asparagine 94, asparagine 342, asparagine 354, and asparagine 534. Residues valine 597–alanine 617 traverse the membrane as a helical segment. Residues glutamine 618–histidine 1046 are Cytoplasmic-facing. EF-hand domains are found at residues proline 815–glycine 850, serine 851–isoleucine 886, and glutamine 895–glutamate 930. Aspartate 828, aspartate 830, asparagine 832, tyrosine 834, glutamate 839, aspartate 864, aspartate 866, asparagine 868, and glutamate 875 together coordinate Ca(2+). The interaction with TXNDC11 stretch occupies residues tyrosine 956–arginine 1250. Residues isoleucine 1047–tyrosine 1067 traverse the membrane as a helical segment. At tyrosine 1068–arginine 1082 the chain is on the extracellular side. A helical membrane pass occupies residues valine 1083–leucine 1103. The Ferric oxidoreductase domain occupies arginine 1089–serine 1271. The Cytoplasmic segment spans residues leucine 1104 to threonine 1138. Residues alanine 1139–isoleucine 1159 traverse the membrane as a helical segment. At serine 1160–glutamine 1190 the chain is on the extracellular side. The chain crosses the membrane as a helical span at residues threonine 1191–alanine 1211. Over serine 1212 to histidine 1228 the chain is Cytoplasmic. The helical transmembrane segment at leucine 1229–proline 1249 threads the bilayer. Residue arginine 1250 is a topological domain, extracellular. A helical transmembrane segment spans residues phenylalanine 1251–serine 1271. One can recognise an FAD-binding FR-type domain in the interval arginine 1272 to glutamate 1378. Residues arginine 1272–phenylalanine 1553 lie on the Cytoplasmic side of the membrane.

This sequence in the N-terminal section; belongs to the peroxidase family. In terms of assembly, interacts with TXNDC11, TPO and CYBA. In terms of processing, N-glycosylated. As to expression, specifically expressed in thyroid.

The protein resides in the apical cell membrane. The enzyme catalyses NADH + O2 + H(+) = H2O2 + NAD(+). It catalyses the reaction NADPH + O2 + H(+) = H2O2 + NADP(+). It participates in hormone biosynthesis; thyroid hormone biosynthesis. Its activity is regulated as follows. The NADPH oxidase activity is calcium-dependent. Peroxidase activity is inhibited by aminobenzohydrazide. Functionally, generates hydrogen peroxide which is required for the activity of thyroid peroxidase/TPO and lactoperoxidase/LPO. Plays a role in thyroid hormones synthesis and lactoperoxidase-mediated antimicrobial defense at the surface of mucosa. May have its own peroxidase activity through its N-terminal peroxidase-like domain. The chain is Dual oxidase 1 (DUOX1) from Sus scrofa (Pig).